Here is a 466-residue protein sequence, read N- to C-terminus: GTPase Der (466 aa).

EngA-type G domains follow at residues proline 30–serine 193 and arginine 203–aspartate 376. GTP is bound by residues glycine 36–serine 43, aspartate 83–tryptophan 87, asparagine 145–aspartate 148, glycine 209–serine 216, aspartate 256–leucine 260, and asparagine 321–aspartate 324. The KH-like domain maps to threonine 377–glutamate 459.

It belongs to the TRAFAC class TrmE-Era-EngA-EngB-Septin-like GTPase superfamily. EngA (Der) GTPase family. Associates with the 50S ribosomal subunit.

Its function is as follows. GTPase that plays an essential role in the late steps of ribosome biogenesis. The polypeptide is GTPase Der (Mycobacterium avium (strain 104)).